The primary structure comprises 293 residues: Epidermal growth factor-like protein 8 (293 aa).

An N-terminal signal peptide occupies residues 1 to 25 (MGSRAELCTLLGGFSFLLLLIPGEG). Positions 34-112 (SQGVCSKQTL…RHPGALTCEA (79 aa)) constitute an EMI domain. 9 disulfide bridges follow: Cys38-Cys97, Cys65-Cys71, Cys96-Cys110, Cys114-Cys124, Cys118-Cys130, Cys132-Cys141, Cys148-Cys159, Cys155-Cys168, and Cys170-Cys183. N-linked (GlcNAc...) asparagine glycosylation is present at Asn50. The region spanning 111 to 142 (EAICAKPCLNGGVCVRPDQCECAPGWGGKHCH) is the EGF-like 1 domain. The EGF-like 2; calcium-binding domain occupies 144 to 184 (DVDECRTSITLCSHHCFNTAGSFTCGCPHDLVLGVDGRTCM). Residues 195 to 232 (SILSVAVREAEKDERALKQEIHELRGRLERLEQWAGQA) are a coiled coil.

The protein localises to the secreted. The polypeptide is Epidermal growth factor-like protein 8 (EGFL8) (Homo sapiens (Human)).